A 484-amino-acid polypeptide reads, in one-letter code: Glutamyl-tRNA(Gln) amidotransferase subunit A (484 aa).

Residues Lys-76 and Ser-151 each act as charge relay system in the active site. Ser-175 acts as the Acyl-ester intermediate in catalysis.

It belongs to the amidase family. GatA subfamily. Heterotrimer of A, B and C subunits.

It catalyses the reaction L-glutamyl-tRNA(Gln) + L-glutamine + ATP + H2O = L-glutaminyl-tRNA(Gln) + L-glutamate + ADP + phosphate + H(+). Its function is as follows. Allows the formation of correctly charged Gln-tRNA(Gln) through the transamidation of misacylated Glu-tRNA(Gln) in organisms which lack glutaminyl-tRNA synthetase. The reaction takes place in the presence of glutamine and ATP through an activated gamma-phospho-Glu-tRNA(Gln). In Hahella chejuensis (strain KCTC 2396), this protein is Glutamyl-tRNA(Gln) amidotransferase subunit A.